The primary structure comprises 252 residues: Putative zinc finger CCCH domain-containing protein 58 (252 aa).

Residues 35-62 (NHKSVLCMKWREGRCHNGVACRYAHGEE) form a C3H1-type zinc finger. 3 disordered regions span residues 71–95 (RVGG…SGST), 109–180 (RHGR…SAAD), and 215–252 (TATS…APPK). 2 stretches are compositionally biased toward low complexity: residues 133-149 (SARS…TTPP) and 229-238 (ITTTTSSSTT).

The sequence is that of Putative zinc finger CCCH domain-containing protein 58 from Oryza sativa subsp. japonica (Rice).